A 501-amino-acid polypeptide reads, in one-letter code: Cytochrome P450 6j1 (501 aa).

Cysteine 444 lines the heme pocket.

Belongs to the cytochrome P450 family. Heme is required as a cofactor.

It is found in the endoplasmic reticulum membrane. It localises to the microsome membrane. This chain is Cytochrome P450 6j1 (CYP6J1), found in Blattella germanica (German cockroach).